The primary structure comprises 63 residues: Beta-defensin 38 (63 aa).

The signal sequence occupies residues Met1 to Ala21. 3 disulfides stabilise this stretch: Cys29–Cys58, Cys36–Cys51, and Cys41–Cys59.

Belongs to the beta-defensin family. As to expression, only expressed in epididymis (caput, corpus and cauda).

It localises to the secreted. In terms of biological role, synthetic Defb38 kills both Gram-negative (E.coli and P.aeruginosa) and Gram-positive (E.faecium) bacteria. This chain is Beta-defensin 38 (Defb38), found in Mus musculus (Mouse).